The primary structure comprises 173 residues: T-cell surface glycoprotein CD3 gamma chain (173 aa).

The N-terminal stretch at 1-22 is a signal peptide; that stretch reads MEQGKHLAGLILAVFLLQGTMA. Residues 23–111 are Extracellular-facing; that stretch reads HVKEVKVDDN…NCIELNPSTV (89 aa). The region spanning 24–94 is the Ig-like domain; sequence VKEVKVDDNR…GSNNQSKSLQ (71 aa). Cysteine 42 and cysteine 83 are disulfide-bonded. Asparagine 45 and asparagine 88 each carry an N-linked (GlcNAc...) asparagine glycan. Residues 112–132 form a helical membrane-spanning segment; that stretch reads AGFIFTEIVSIFLLAVGVYFI. Topologically, residues 133–173 are cytoplasmic; the sequence is AGQEGVRQSRASDKQTLLNNDQLYQPLKEREDDQYSHLRKN. Serine 141 is modified (phosphoserine). A Phosphoserine; by PKC modification is found at serine 144. Positions 145–173 constitute an ITAM domain; it reads DKQTLLNNDQLYQPLKEREDDQYSHLRKN. The short motif at 149–150 is the Di-leucine motif element; the sequence is LL.

As to quaternary structure, the TCR-CD3 complex is composed of a CD3D/CD3E and a CD3G/CD3E heterodimers that preferentially associate with TCRalpha and TCRbeta, respectively, to form TCRalpha/CD3E/CD3G and TCRbeta/CD3G/CD3E trimers. In turn, the hexamer interacts with CD3Z homodimer to form the TCR-CD3 complex. Alternatively, TCRalpha and TCRbeta can be replaced by TCRgamma and TCRdelta. Phosphorylated on Tyr residues after T-cell receptor triggering by LCK in association with CD4/CD8. Phosphorylated also by PKC; leading to the TCR complex down-regulation. Post-translationally, phosphorylated on Tyr residues after T-cell receptor triggering by LCK in association with CD4/CD8.

The protein localises to the cell membrane. Part of the TCR-CD3 complex present on T-lymphocyte cell surface that plays an essential role in adaptive immune response. When antigen presenting cells (APCs) activate T-cell receptor (TCR), TCR-mediated signals are transmitted across the cell membrane by the CD3 chains CD3D, CD3E, CD3G and CD3Z. All CD3 chains contain immunoreceptor tyrosine-based activation motifs (ITAMs) in their cytoplasmic domain. Upon TCR engagement, these motifs become phosphorylated by Src family protein tyrosine kinases LCK and FYN, resulting in the activation of downstream signaling pathways. In addition to this role of signal transduction in T-cell activation, CD3G plays an essential role in the dynamic regulation of TCR expression at the cell surface. Indeed, constitutive TCR cycling is dependent on the di-leucine-based (diL) receptor-sorting motif present in CD3G. This Bos taurus (Bovine) protein is T-cell surface glycoprotein CD3 gamma chain (CD3G).